A 402-amino-acid chain; its full sequence is Nicotinate phosphoribosyltransferase (402 aa).

H221 carries the phosphohistidine; by autocatalysis modification.

This sequence belongs to the NAPRTase family. Transiently phosphorylated on a His residue during the reaction cycle. Phosphorylation strongly increases the affinity for substrates and increases the rate of nicotinate D-ribonucleotide production. Dephosphorylation regenerates the low-affinity form of the enzyme, leading to product release.

The enzyme catalyses nicotinate + 5-phospho-alpha-D-ribose 1-diphosphate + ATP + H2O = nicotinate beta-D-ribonucleotide + ADP + phosphate + diphosphate. The protein operates within cofactor biosynthesis; NAD(+) biosynthesis; nicotinate D-ribonucleotide from nicotinate: step 1/1. Its function is as follows. Catalyzes the synthesis of beta-nicotinate D-ribonucleotide from nicotinate and 5-phospho-D-ribose 1-phosphate at the expense of ATP. The chain is Nicotinate phosphoribosyltransferase from Sodalis glossinidius (strain morsitans).